The following is a 231-amino-acid chain: 5'-methylthioadenosine/S-adenosylhomocysteine nucleosidase (231 aa).

The active-site Proton acceptor is the Glu12. Substrate contacts are provided by residues Gly78, Ile153, and Met174–Glu175. Asp198 (proton donor) is an active-site residue.

This sequence belongs to the PNP/UDP phosphorylase family. MtnN subfamily.

It carries out the reaction S-adenosyl-L-homocysteine + H2O = S-(5-deoxy-D-ribos-5-yl)-L-homocysteine + adenine. The catalysed reaction is S-methyl-5'-thioadenosine + H2O = 5-(methylsulfanyl)-D-ribose + adenine. It catalyses the reaction 5'-deoxyadenosine + H2O = 5-deoxy-D-ribose + adenine. The protein operates within amino-acid biosynthesis; L-methionine biosynthesis via salvage pathway; S-methyl-5-thio-alpha-D-ribose 1-phosphate from S-methyl-5'-thioadenosine (hydrolase route): step 1/2. Its function is as follows. Catalyzes the irreversible cleavage of the glycosidic bond in both 5'-methylthioadenosine (MTA) and S-adenosylhomocysteine (SAH/AdoHcy) to adenine and the corresponding thioribose, 5'-methylthioribose and S-ribosylhomocysteine, respectively. Also cleaves 5'-deoxyadenosine, a toxic by-product of radical S-adenosylmethionine (SAM) enzymes, into 5-deoxyribose and adenine. In Maridesulfovibrio salexigens (strain ATCC 14822 / DSM 2638 / NCIMB 8403 / VKM B-1763) (Desulfovibrio salexigens), this protein is 5'-methylthioadenosine/S-adenosylhomocysteine nucleosidase.